Consider the following 292-residue polypeptide: D-tagatose-1,6-bisphosphate aldolase subunit KbaY (292 aa).

The active-site Proton donor is Asp82. Residues His83 and His180 each coordinate Zn(2+). Gly181 contacts dihydroxyacetone phosphate. Position 208 (His208) interacts with Zn(2+). Dihydroxyacetone phosphate-binding positions include 209–211 (GAS) and 230–233 (NVAT).

It belongs to the class II fructose-bisphosphate aldolase family. TagBP aldolase KbaY subfamily. In terms of assembly, homotetramer. Forms a complex with KbaZ. Zn(2+) serves as cofactor.

It catalyses the reaction D-tagatofuranose 1,6-bisphosphate = D-glyceraldehyde 3-phosphate + dihydroxyacetone phosphate. Its pathway is carbohydrate metabolism; D-tagatose 6-phosphate degradation; D-glyceraldehyde 3-phosphate and glycerone phosphate from D-tagatose 6-phosphate: step 2/2. Catalytic subunit of the tagatose-1,6-bisphosphate aldolase KbaYZ, which catalyzes the reversible aldol condensation of dihydroxyacetone phosphate (DHAP or glycerone-phosphate) with glyceraldehyde 3-phosphate (G3P) to produce tagatose 1,6-bisphosphate (TBP). Requires KbaZ subunit for full activity and stability. The sequence is that of D-tagatose-1,6-bisphosphate aldolase subunit KbaY from Enterobacter sp. (strain 638).